The sequence spans 197 residues: Pyridoxal 5'-phosphate synthase subunit PdxT (197 aa).

52–54 (GES) is an L-glutamine binding site. C84 (nucleophile) is an active-site residue. L-glutamine contacts are provided by residues R116 and 143–144 (IR). Catalysis depends on charge relay system residues H179 and E181.

The protein belongs to the glutaminase PdxT/SNO family. As to quaternary structure, in the presence of PdxS, forms a dodecamer of heterodimers. Only shows activity in the heterodimer.

It carries out the reaction aldehydo-D-ribose 5-phosphate + D-glyceraldehyde 3-phosphate + L-glutamine = pyridoxal 5'-phosphate + L-glutamate + phosphate + 3 H2O + H(+). The catalysed reaction is L-glutamine + H2O = L-glutamate + NH4(+). The protein operates within cofactor biosynthesis; pyridoxal 5'-phosphate biosynthesis. Its function is as follows. Catalyzes the hydrolysis of glutamine to glutamate and ammonia as part of the biosynthesis of pyridoxal 5'-phosphate. The resulting ammonia molecule is channeled to the active site of PdxS. This Ignicoccus hospitalis (strain KIN4/I / DSM 18386 / JCM 14125) protein is Pyridoxal 5'-phosphate synthase subunit PdxT.